A 506-amino-acid polypeptide reads, in one-letter code: Trans-cinnamate 4-monooxygenase (506 aa).

The chain crosses the membrane as a helical span at residues 3 to 23; that stretch reads LLLLEKALLGLFAAAVVAIAV. Residues 213 to 218 and Ala306 contribute to the (E)-cinnamate site; that span reads RSRLAQ. A heme-binding site is contributed by Cys447.

Belongs to the cytochrome P450 family. The cofactor is heme.

It is found in the membrane. The enzyme catalyses (E)-cinnamate + reduced [NADPH--hemoprotein reductase] + O2 = (E)-4-coumarate + oxidized [NADPH--hemoprotein reductase] + H2O + H(+). The protein operates within phenylpropanoid metabolism; trans-4-coumarate biosynthesis; trans-4-coumarate from trans-cinnamate: step 1/1. Functionally, catalyzes the first oxidative step of the phenylpropanoid pathway in higher plants by transforming trans-cinnamate into p-coumarate. The compounds formed by this pathway are essential components for lignification, pollination, and defense against ultraviolet light, predators and pathogens. This Ruta graveolens (Common rue) protein is Trans-cinnamate 4-monooxygenase (CYP73A2).